The following is a 275-amino-acid chain: 2,3,4,5-tetrahydropyridine-2,6-dicarboxylate N-succinyltransferase (275 aa).

The substrate site is built by Arg106 and Asp143.

The protein belongs to the transferase hexapeptide repeat family. In terms of assembly, homotrimer.

It is found in the cytoplasm. It catalyses the reaction (S)-2,3,4,5-tetrahydrodipicolinate + succinyl-CoA + H2O = (S)-2-succinylamino-6-oxoheptanedioate + CoA. It functions in the pathway amino-acid biosynthesis; L-lysine biosynthesis via DAP pathway; LL-2,6-diaminopimelate from (S)-tetrahydrodipicolinate (succinylase route): step 1/3. The protein is 2,3,4,5-tetrahydropyridine-2,6-dicarboxylate N-succinyltransferase of Burkholderia ambifaria (strain ATCC BAA-244 / DSM 16087 / CCUG 44356 / LMG 19182 / AMMD) (Burkholderia cepacia (strain AMMD)).